The chain runs to 133 residues: Transcription antitermination protein NusB (133 aa).

Belongs to the NusB family.

In terms of biological role, involved in transcription antitermination. Required for transcription of ribosomal RNA (rRNA) genes. Binds specifically to the boxA antiterminator sequence of the ribosomal RNA (rrn) operons. In Clostridium novyi (strain NT), this protein is Transcription antitermination protein NusB.